A 203-amino-acid polypeptide reads, in one-letter code: ATP-dependent dethiobiotin synthetase BioD (203 aa).

Residue 11–16 (NVGKTI) coordinates ATP. Threonine 15 serves as a coordination point for Mg(2+). The active site involves lysine 31. Position 35 (threonine 35) interacts with substrate. ATP is bound by residues aspartate 42 and 94-97 (EGAG). Residues aspartate 42 and glutamate 94 each contribute to the Mg(2+) site.

This sequence belongs to the dethiobiotin synthetase family. As to quaternary structure, homodimer. Mg(2+) is required as a cofactor.

The protein resides in the cytoplasm. It carries out the reaction (7R,8S)-7,8-diammoniononanoate + CO2 + ATP = (4R,5S)-dethiobiotin + ADP + phosphate + 3 H(+). Its pathway is cofactor biosynthesis; biotin biosynthesis; biotin from 7,8-diaminononanoate: step 1/2. Functionally, catalyzes a mechanistically unusual reaction, the ATP-dependent insertion of CO2 between the N7 and N8 nitrogen atoms of 7,8-diaminopelargonic acid (DAPA, also called 7,8-diammoniononanoate) to form a ureido ring. The chain is ATP-dependent dethiobiotin synthetase BioD from Lawsonia intracellularis (strain PHE/MN1-00).